The sequence spans 397 residues: Purine ribonucleoside efflux pump NepI (397 aa).

The Cytoplasmic segment spans residues 1–21 (MNENIAEKFRADGVARPNWSA). Residues 22-42 (VFAVAFCVACLITVEFLPVSL) form a helical membrane-spanning segment. Residues 43–54 (LTPMAQDLGISE) are Periplasmic-facing. A helical membrane pass occupies residues 55-75 (GVAGQSVTVTAFVAMFSSLFI). Over 76 to 85 (TQIIQATDRR) the chain is Cytoplasmic. A helical membrane pass occupies residues 86-106 (YIVILFAVLLTASCLMVSFAN). Position 107 (Ser107) is a topological domain, periplasmic. A helical membrane pass occupies residues 108–128 (FTLLLLGRACLGLALGGFWAM). Over 129–147 (SASLTMRLVPARTVPKALS) the chain is Cytoplasmic. Residues 148–168 (VIFGAVSIALVIAAPLGSFLG) traverse the membrane as a helical segment. Residues 169–175 (GIIGWRN) are Periplasmic-facing. The chain crosses the membrane as a helical span at residues 176–196 (VFNAAAVMGVLCVIWVVKSLP). Residues 197–215 (SLPGEPSHQKQNMFSLLQR) lie on the Cytoplasmic side of the membrane. The helical transmembrane segment at 216–236 (PGVMAGMIAIFMSFAGQFAFF) threads the bilayer. Residues 237-255 (TYIRPVYMNLAGFDVDGLT) are Periplasmic-facing. A helical membrane pass occupies residues 256–276 (LVLLSFGIASFVGTSFSSYVL). The Cytoplasmic segment spans residues 277-281 (KRSVK). A helical transmembrane segment spans residues 282–302 (LALAGAPLLLALSALTLIVWG). Residues 303–305 (SDK) are Periplasmic-facing. The chain crosses the membrane as a helical span at residues 306–326 (TVAAVIAIIWGLAFALVPVGW). The Cytoplasmic portion of the chain corresponds to 327-343 (STWITRSLADQAEKAGS). The helical transmembrane segment at 344–364 (IQVAVIQLANTCGAAVGGYAL) threads the bilayer. The Periplasmic segment spans residues 365 to 366 (DN). Residues 367 to 387 (FGLLSPLALSGGLMLLTALVV) form a helical membrane-spanning segment. The Cytoplasmic segment spans residues 388–397 (AAKVRITPMS).

The protein belongs to the major facilitator superfamily. DHA1 family. NepI (TC 2.A.1.2.26) subfamily.

It is found in the cell inner membrane. The enzyme catalyses inosine(in) + H(+)(out) = inosine(out) + H(+)(in). It catalyses the reaction guanosine(in) + H(+)(out) = guanosine(out) + H(+)(in). Involved in the efflux of purine ribonucleosides, such as inosine and guanosine. In Salmonella paratyphi B (strain ATCC BAA-1250 / SPB7), this protein is Purine ribonucleoside efflux pump NepI.